Reading from the N-terminus, the 521-residue chain is MSSSTVWILISILLATVGAVVGFFVRKSIAEAKINGAANEAKRILDEANRDAEALKKEALLEAKDEIHTLRTEAELEIRDRRSELQKQENRLMQKEENLDRKDETLDNRERQLEKKEESLVAKQQQIEELESKVGELVQKQQTELERISNLTREQAKAIILGKVESEVSHEIAVMVKESEVRAKEEADKKAKEILSLAMQRCAADHVAETTVSVVNLPNDEMKGRIIGREGRNIRTLETLTGIDLIIDDTPEAVILSGFDPIRRETARIALDKLVQDGRIHPARIEEMVEKSRREVDEYIREVGEQTTFEVGVHGLHPDLIKILGRLKYRTSYGQNVLKHSMEVAYLTGLMAAELGEDEKLARRAGLLHDIGKAIDHEVEGSHVEIGVELATKYKEHPVVINSIASHHGDTEPTSIIAVLVAAADALSAARPGARSETLENYIRRLEKLEEISESYEGVEKSFAIQAGREVRILVKPDTIDDLEAHRLARDIRKRIENELDYPGHIKVTVIRETRAVEYAK.

A helical membrane pass occupies residues T5 to V25. Positions K87 to E117 are disordered. One can recognise a KH domain in the interval T211–L274. The region spanning V337–A430 is the HD domain.

Belongs to the RNase Y family.

It is found in the cell membrane. Its function is as follows. Endoribonuclease that initiates mRNA decay. In Bacillus mycoides (strain KBAB4) (Bacillus weihenstephanensis), this protein is Ribonuclease Y.